The sequence spans 333 residues: Biotin synthase (333 aa).

The Radical SAM core domain occupies 40-269 (YRVQLASLLS…HARVRLSAGR (230 aa)). [4Fe-4S] cluster-binding residues include Cys55, Cys59, and Cys62. The [2Fe-2S] cluster site is built by Cys100, Cys132, Cys192, and Arg264.

It belongs to the radical SAM superfamily. Biotin synthase family. Homodimer. Requires [4Fe-4S] cluster as cofactor. [2Fe-2S] cluster is required as a cofactor.

It catalyses the reaction (4R,5S)-dethiobiotin + (sulfur carrier)-SH + 2 reduced [2Fe-2S]-[ferredoxin] + 2 S-adenosyl-L-methionine = (sulfur carrier)-H + biotin + 2 5'-deoxyadenosine + 2 L-methionine + 2 oxidized [2Fe-2S]-[ferredoxin]. It participates in cofactor biosynthesis; biotin biosynthesis; biotin from 7,8-diaminononanoate: step 2/2. In terms of biological role, catalyzes the conversion of dethiobiotin (DTB) to biotin by the insertion of a sulfur atom into dethiobiotin via a radical-based mechanism. This Synechococcus sp. (strain CC9902) protein is Biotin synthase.